We begin with the raw amino-acid sequence, 648 residues long: Transcription initiation factor TFIID subunit 5 (648 aa).

Positions 1–13 (MDSENSSSHSISS) are enriched in low complexity. Residues 1–21 (MDSENSSSHSISSPQMFQNTH) form a disordered region. The 33-residue stretch at 35 to 67 (MNNESLQMIIGYLRRNGLTETEELLTREAGPVL) folds into the LisH domain. WD repeat units follow at residues 317–358 (NAPI…KKLR), 392–431 (GHGG…NAVI), 433–472 (RTPA…PLRI), 475–514 (DPYG…RVRI), 517–556 (GHKA…LVAA), and 560–599 (EQAG…GTVL).

It belongs to the WD repeat TAF5 family. As to quaternary structure, component of the TFIID basal transcription factor complex, composed of TATA-box-binding protein tbp-1, and a number of TBP-associated factors (TAFs).

It localises to the nucleus. The TFIID basal transcription factor complex plays a major role in the initiation of RNA polymerase II (Pol II)-dependent transcription. TFIID recognizes and binds promoters via its subunit tbp-1, a TATA-box-binding protein, and promotes assembly of the pre-initiation complex (PIC). The TFIID complex consists of tbp-1 and TBP-associated factors (TAFs), including taf-5. Essential for early embryonic development, but not required for transcription of some genes; probably acts via activating transcription initiation by RNA Pol II, as part of the TFIID complex. This chain is Transcription initiation factor TFIID subunit 5, found in Caenorhabditis elegans.